The chain runs to 383 residues: S-adenosylmethionine synthase (383 aa).

His15 is a binding site for ATP. Residue Asp17 coordinates Mg(2+). Glu43 serves as a coordination point for K(+). L-methionine contacts are provided by Glu56 and Gln99. Residues 99–109 (QSPDINQGVDR) are flexible loop. Residues 164–166 (DAK), 230–231 (RF), Asp239, 245–246 (RK), Ala262, and Lys266 each bind ATP. An L-methionine-binding site is contributed by Asp239. Lys270 contributes to the L-methionine binding site.

The protein belongs to the AdoMet synthase family. As to quaternary structure, homotetramer; dimer of dimers. Mg(2+) is required as a cofactor. The cofactor is K(+).

The protein localises to the cytoplasm. It catalyses the reaction L-methionine + ATP + H2O = S-adenosyl-L-methionine + phosphate + diphosphate. It participates in amino-acid biosynthesis; S-adenosyl-L-methionine biosynthesis; S-adenosyl-L-methionine from L-methionine: step 1/1. Functionally, catalyzes the formation of S-adenosylmethionine (AdoMet) from methionine and ATP. The overall synthetic reaction is composed of two sequential steps, AdoMet formation and the subsequent tripolyphosphate hydrolysis which occurs prior to release of AdoMet from the enzyme. The chain is S-adenosylmethionine synthase from Shewanella baltica (strain OS223).